A 117-amino-acid polypeptide reads, in one-letter code: Transcription elongation factor A protein-like 8 (117 aa).

Composition is skewed to basic and acidic residues over residues 1 to 10 and 61 to 75; these read MQKSCEENEG and FKEDTPVRHLDPEEM. The segment at 1 to 75 is disordered; the sequence is MQKSCEENEG…PVRHLDPEEM (75 aa). A coiled-coil region spans residues 73 to 100; that stretch reads EEMIRGVDELERLREEIRRVRNKFVMMH.

This sequence belongs to the TFS-II family. TFA subfamily.

Its subcellular location is the nucleus. In terms of biological role, may be involved in transcriptional regulation. The sequence is that of Transcription elongation factor A protein-like 8 (TCEAL8) from Homo sapiens (Human).